We begin with the raw amino-acid sequence, 316 residues long: Acetyl-coenzyme A carboxylase carboxyl transferase subunit alpha (316 aa).

One can recognise a CoA carboxyltransferase C-terminal domain in the interval 39–293 (RLQDKSHALT…RQTLLAQLES (255 aa)).

Belongs to the AccA family. As to quaternary structure, acetyl-CoA carboxylase is a heterohexamer composed of biotin carboxyl carrier protein (AccB), biotin carboxylase (AccC) and two subunits each of ACCase subunit alpha (AccA) and ACCase subunit beta (AccD).

It is found in the cytoplasm. It carries out the reaction N(6)-carboxybiotinyl-L-lysyl-[protein] + acetyl-CoA = N(6)-biotinyl-L-lysyl-[protein] + malonyl-CoA. It participates in lipid metabolism; malonyl-CoA biosynthesis; malonyl-CoA from acetyl-CoA: step 1/1. In terms of biological role, component of the acetyl coenzyme A carboxylase (ACC) complex. First, biotin carboxylase catalyzes the carboxylation of biotin on its carrier protein (BCCP) and then the CO(2) group is transferred by the carboxyltransferase to acetyl-CoA to form malonyl-CoA. The polypeptide is Acetyl-coenzyme A carboxylase carboxyl transferase subunit alpha (Azotobacter vinelandii (strain DJ / ATCC BAA-1303)).